Consider the following 104-residue polypeptide: Large ribosomal subunit protein bL21 (104 aa).

This sequence belongs to the bacterial ribosomal protein bL21 family. Part of the 50S ribosomal subunit. Contacts protein L20.

Functionally, this protein binds to 23S rRNA in the presence of protein L20. The protein is Large ribosomal subunit protein bL21 of Streptococcus thermophilus (strain ATCC BAA-491 / LMD-9).